The following is a 972-amino-acid chain: Glycine dehydrogenase (decarboxylating) (972 aa).

Lysine 713 is subject to N6-(pyridoxal phosphate)lysine.

Belongs to the GcvP family. In terms of assembly, the glycine cleavage system is composed of four proteins: P, T, L and H. Requires pyridoxal 5'-phosphate as cofactor.

It catalyses the reaction N(6)-[(R)-lipoyl]-L-lysyl-[glycine-cleavage complex H protein] + glycine + H(+) = N(6)-[(R)-S(8)-aminomethyldihydrolipoyl]-L-lysyl-[glycine-cleavage complex H protein] + CO2. Functionally, the glycine cleavage system catalyzes the degradation of glycine. The P protein binds the alpha-amino group of glycine through its pyridoxal phosphate cofactor; CO(2) is released and the remaining methylamine moiety is then transferred to the lipoamide cofactor of the H protein. The sequence is that of Glycine dehydrogenase (decarboxylating) from Aromatoleum aromaticum (strain DSM 19018 / LMG 30748 / EbN1) (Azoarcus sp. (strain EbN1)).